The primary structure comprises 701 residues: MSPAPQNRQPSGVPVGGQFAATNHAEPGIGLATFGSEEEYQAAVTTALSAAKAYETTDVEEMNDAEFDRLLAKIASHEAANGIEPEHDLHDTIGHGGAGGGDVEHATPMKSLEKPGEDAVIEFAAKHPKAVIEPKIDGLAISVRYENGKMVRAARRGDGYTGEDVTDRVRGVDGLPEMAGDGDYEVRGELYLNDENKAKANAIRQAAGKAPFANARNGVAGMLNKQDGSYAGLFSFAAYSTTIDEKADHLDSMQQLEGMGFTTARSLLPQSVLDAEDPMAAIAALGAERKGLNFLMDGAVLKVNTAAERAELGEGSRAPKWAVAYKYPAVEEPTVIEDIEYNIGKTGRLSIRARLTPVEVDGSVVEYASLHNVGHLQAADMRIGDTVSAYKANDIIPQVHLPRADLRDESSQPWQPPSVCPQCSEPFDKSTELWRCHTPECSVSGRISYAASRDAGLDIEGLGGSIGDALIEKDLVKDVSDLFYLGEDQLAEVELGETSTGGTRTLGQKNAAKIMAEIEKAKSQPLNRVITALSMRFTGRTFGRRLAAEFGTMEALQAATVSQLANVEGIGQKKAEVIHEQLKKNAPVIAKLREAGVNMGAPKAAPAAGAKAPKLTKPDGKPMNVVVTGSVKGSPLGSLSRSGVQELIEAKGGKASGSVSKTTDLLVCGEPGSSKFLKAQELGIRIVTPDEFAQMVEDGEV.

Residues 1–10 (MSPAPQNRQP) show a composition bias toward polar residues. Positions 1–21 (MSPAPQNRQPSGVPVGGQFAA) are disordered. NAD(+) contacts are provided by residues 64–68 (DAEFD), 111–112 (SL), and E133. K135 serves as the catalytic N6-AMP-lysine intermediate. The NAD(+) site is built by R156, E189, K302, and K326. Residues C420, C423, C436, and C441 each contribute to the Zn(2+) site. The span at 603-613 (KAAPAAGAKAP) shows a compositional bias: low complexity. The tract at residues 603-623 (KAAPAAGAKAPKLTKPDGKPM) is disordered. The BRCT domain occupies 615–701 (LTKPDGKPMN…FAQMVEDGEV (87 aa)).

It belongs to the NAD-dependent DNA ligase family. LigA subfamily. The cofactor is Mg(2+). Requires Mn(2+) as cofactor.

The catalysed reaction is NAD(+) + (deoxyribonucleotide)n-3'-hydroxyl + 5'-phospho-(deoxyribonucleotide)m = (deoxyribonucleotide)n+m + AMP + beta-nicotinamide D-nucleotide.. In terms of biological role, DNA ligase that catalyzes the formation of phosphodiester linkages between 5'-phosphoryl and 3'-hydroxyl groups in double-stranded DNA using NAD as a coenzyme and as the energy source for the reaction. It is essential for DNA replication and repair of damaged DNA. This chain is DNA ligase 2, found in Pseudarthrobacter chlorophenolicus (strain ATCC 700700 / DSM 12829 / CIP 107037 / JCM 12360 / KCTC 9906 / NCIMB 13794 / A6) (Arthrobacter chlorophenolicus).